Consider the following 197-residue polypeptide: MNFLLLLLAAYALGSTPFAIVSSRLFGLADPRRYGSGNPGATNVLRSGNKAAALLTLVGDCAKGWLAVWGAAKLGFSPVEAALAGLAAFLGHVFSVFLRFRGGKGVATALGVLAGINAWVALSALFVWLAVAVLTRYSSAAALAAAVITPISGAVLLGATPTVAVLALIAGILVWRHAPNIRKLMNGSESKIGASKS.

The next 4 membrane-spanning stretches (helical) occupy residues 1-21 (MNFLLLLLAAYALGSTPFAIV), 78-98 (PVEAALAGLAAFLGHVFSVFL), 112-132 (VLAGINAWVALSALFVWLAVA), and 155-175 (VLLGATPTVAVLALIAGILVW).

This sequence belongs to the PlsY family. Probably interacts with PlsX.

The protein resides in the cell inner membrane. The catalysed reaction is an acyl phosphate + sn-glycerol 3-phosphate = a 1-acyl-sn-glycero-3-phosphate + phosphate. Its pathway is lipid metabolism; phospholipid metabolism. Catalyzes the transfer of an acyl group from acyl-phosphate (acyl-PO(4)) to glycerol-3-phosphate (G3P) to form lysophosphatidic acid (LPA). This enzyme utilizes acyl-phosphate as fatty acyl donor, but not acyl-CoA or acyl-ACP. The chain is Glycerol-3-phosphate acyltransferase from Aromatoleum aromaticum (strain DSM 19018 / LMG 30748 / EbN1) (Azoarcus sp. (strain EbN1)).